The sequence spans 359 residues: E3 ubiquitin-protein ligase RNF146 (359 aa).

The segment at 38 to 76 (CAICLQTCVHPVSLPCKHVFCYLCVKGASWLGKRCALCR) adopts an RING-type zinc-finger fold. Glycyl lysine isopeptide (Lys-Gly) (interchain with G-Cter in ubiquitin) cross-links involve residues Lys86 and Lys96. The region spanning 93–169 (EELKAASRGN…EHGRRRKIKR (77 aa)) is the WWE domain. The a glycoprotein site is built by Tyr109, Arg112, and Trp116. Lys132 participates in a covalent cross-link: Glycyl lysine isopeptide (Lys-Gly) (interchain with G-Cter in ubiquitin). 4 residues coordinate a glycoprotein: Tyr146, Gln155, Arg165, and Lys177. Lys177 is covalently cross-linked (Glycyl lysine isopeptide (Lys-Gly) (interchain with G-Cter in ubiquitin)). Disordered regions lie at residues 197–243 (SSAD…DAGI) and 261–359 (ERSH…VTEV). The span at 199 to 212 (ADGADSGSAQTGAS) shows a compositional bias: low complexity. Residues 217–235 (VPSSTRPLTSVDGQLTSPV) show a composition bias toward polar residues. Positions 284–298 (SVEETESDASSDSED) are enriched in acidic residues. A phosphoserine mark is found at Ser290 and Ser294. The segment covering 306 to 324 (HSLTQQRPLVPNGNQTVAD) has biased composition (polar residues).

In terms of assembly, can form homooligomers. Interacts with PARsylated AXIN1, AXIN2, BLZF1, CASC3, H1-2, IPO7, LIG3, NCL, PARP1, XRCC1, XRCC5 and XRCC6. Interacts with DDB1, DHX15, IQGAP1, LRPPRC, PARP2, PRKDC, RUVBL2, TNKS1 and TNKS2. Binding often leads to interactor ubiquitination, in the presence of the appropriate E1 and E2 enzymes, and proteasomal degradation. Post-translationally, ubiquitinated; autoubiquitinated. Autoubiquitination is enhanced upon PAR-binding. In terms of tissue distribution, expressed at relatively high levels in the brain. Also present in spleen, heart, kidney, testis and liver. In the brain, expressed in the cerebellum, hippocampus, striatum, cortex, frontal cortex and, at lowest levels, in olfactory bulb (at protein level). Predominantly expressed in neurons.

Its subcellular location is the cytoplasm. The protein localises to the cytosol. It is found in the nucleus. The enzyme catalyses S-ubiquitinyl-[E2 ubiquitin-conjugating enzyme]-L-cysteine + [acceptor protein]-L-lysine = [E2 ubiquitin-conjugating enzyme]-L-cysteine + N(6)-ubiquitinyl-[acceptor protein]-L-lysine.. It functions in the pathway protein modification; protein ubiquitination. Functionally, E3 ubiquitin-protein ligase that specifically binds poly-ADP-ribosylated (PARsylated) proteins and mediates their ubiquitination and subsequent degradation. May regulate many important biological processes, such as cell survival and DNA damage response. Acts as an activator of the Wnt signaling pathway by mediating the ubiquitination of PARsylated AXIN1 and AXIN2, 2 key components of the beta-catenin destruction complex. Acts in cooperation with tankyrase proteins (TNKS and TNKS2), which mediate PARsylation of target proteins AXIN1, AXIN2, BLZF1, CASC3, TNKS and TNKS2. Recognizes and binds tankyrase-dependent PARsylated proteins via its WWE domain and mediates their ubiquitination, leading to their degradation. Different ubiquitin linkage types have been observed: TNKS2 undergoes ubiquitination at 'Lys-48' and 'Lys-63', while AXIN1 is only ubiquitinated at 'Lys-48'. May regulate TNKS and TNKS2 subcellular location, preventing aggregation at a centrosomal location. Neuroprotective protein. Protects the brain against N-methyl-D-aspartate (NMDA) receptor-mediated glutamate excitotoxicity and ischemia, by interfering with PAR-induced cell death, called parthanatos. Prevents nuclear translocation of AIFM1 in a PAR-binding dependent manner. Does not affect PARP1 activation. Protects against cell death induced by DNA damaging agents, such as N-methyl-N-nitro-N-nitrosoguanidine (MNNG) and rescues cells from G1 arrest. Promotes cell survival after gamma-irradiation. Facilitates DNA repair. The polypeptide is E3 ubiquitin-protein ligase RNF146 (Rnf146) (Mus musculus (Mouse)).